The sequence spans 268 residues: MAVGKNKGLSKGGKKGGKKKVVDPFSRKDWYDVKAPNMFQTRQIGKTLVNRTQGQRIASDYLKGRVFEVSLADLQKDIDPERSFRKFRLIAEDVQDRNVLCNFHGMDLTTDKYRSMVKKWQTLIEAIVEAKTVDGYLLRVFCIGFTSKDQQSQRKTCYAQQSQVRKIRARMTDIITNEVSGADLKQLVNKLALDSIAKDIEKSCQRIYPLHDVYIRKVKVLKKPRFDVSKLLELHGDGGGKTTEAVVSAEGAVIDRPEGYEPPVQEAV.

The segment at 1–21 is disordered; the sequence is MAVGKNKGLSKGGKKGGKKKV.

It belongs to the eukaryotic ribosomal protein eS1 family. Component of the small ribosomal subunit. Mature ribosomes consist of a small (40S) and a large (60S) subunit. The 40S subunit contains about 33 different proteins and 1 molecule of RNA (18S). The 60S subunit contains about 49 different proteins and 3 molecules of RNA (28S, 5.8S and 5S).

The protein resides in the cytoplasm. Its function is as follows. Essential for oogenesis; required for late follicle cell development. This is Small ribosomal subunit protein eS1 from Drosophila virilis (Fruit fly).